Reading from the N-terminus, the 363-residue chain is MNKLALYCRAGFEKETAGEITDKAAQLGVFGFVNLKENSGYIIFECYQAGDADRLARELKFEQLIFARQMIVVGDMLQDLPAEDRISPIVAQYQALNPRHSSDIFVETPDTNEAKELLTFCRKFTVPLRSSLKKQGWLTKSERAKGSMGLHILFVRPGCCYVGYAYNDNKSPFFMGIPRLKFPAEAPSRSTLKLEEAILTFIPEAEEKKRFTDEMTGVDLGACPGGWTYQLVKRGVFVYAVDHGKMAASLHETGRIEHCPEDGFKFQPLKRKTIDWLVCDMVEQPMRISKLIGKWLINGWCRETIFNLKLPMKKRYQEVQLCLAYLEEELEKQGFWFKIQAKHLYHDREEITVHIAVMGRKPQ.

S-adenosyl-L-methionine is bound by residues Ser-190, 223 to 226, Asp-242, Asp-262, and Asp-280; that span reads CPGG. Residue Lys-309 is the Proton acceptor of the active site.

Belongs to the class I-like SAM-binding methyltransferase superfamily. RNA methyltransferase RlmE family. RlmM subfamily. In terms of assembly, monomer.

The protein localises to the cytoplasm. The catalysed reaction is cytidine(2498) in 23S rRNA + S-adenosyl-L-methionine = 2'-O-methylcytidine(2498) in 23S rRNA + S-adenosyl-L-homocysteine + H(+). Functionally, catalyzes the 2'-O-methylation at nucleotide C2498 in 23S rRNA. The protein is Ribosomal RNA large subunit methyltransferase M of Actinobacillus pleuropneumoniae serotype 5b (strain L20).